The sequence spans 863 residues: Protein translocase subunit SecA (863 aa).

ATP contacts are provided by residues Gln88, 106–110, and Asp507; that span reads GEGKT. Positions 806–863 are disordered; the sequence is KSHEQNEQFLSNTTESGVNENGEAQITKVPRNSPCPCGSGKKYKECHGKSGPKKGILA. The span at 812–829 shows a compositional bias: polar residues; the sequence is EQFLSNTTESGVNENGEA. Cys840, Cys842, Cys851, and His852 together coordinate Zn(2+).

Belongs to the SecA family. As to quaternary structure, monomer and homodimer. Part of the essential Sec protein translocation apparatus which comprises SecA, SecYEG and auxiliary proteins SecDF-YajC and YidC. It depends on Zn(2+) as a cofactor.

The protein resides in the cell inner membrane. It localises to the cytoplasm. The catalysed reaction is ATP + H2O + cellular proteinSide 1 = ADP + phosphate + cellular proteinSide 2.. In terms of biological role, part of the Sec protein translocase complex. Interacts with the SecYEG preprotein conducting channel. Has a central role in coupling the hydrolysis of ATP to the transfer of proteins into and across the cell membrane, serving as an ATP-driven molecular motor driving the stepwise translocation of polypeptide chains across the membrane. This chain is Protein translocase subunit SecA, found in Campylobacter lari (strain RM2100 / D67 / ATCC BAA-1060).